A 124-amino-acid polypeptide reads, in one-letter code: Seripauperin-3 (124 aa).

A helical membrane pass occupies residues 7–24 (IAAGVAAIAAGIAAAPAT).

This sequence belongs to the SRP1/TIP1 family. Seripauperin subfamily.

Its subcellular location is the membrane. The chain is Seripauperin-3 (PAU3) from Saccharomyces cerevisiae (strain ATCC 204508 / S288c) (Baker's yeast).